A 979-amino-acid chain; its full sequence is Peptidyl-glycine alpha-amidating monooxygenase (979 aa).

Residues 1–24 (MAGRARSRLLLLLGLLALQSSCLA) form the signal peptide. The interval 1 to 497 (MAGRARSRLL…EGPWEPELAG (497 aa)) is peptidylglycine alpha-hydroxylating monooxygenase. Residues 25 to 34 (FRSPLSVFKR) constitute a propeptide that is removed on maturation. The Intragranular segment spans residues 35-869 (FKETTRSFSN…KKLIKDPGSG (835 aa)). Disulfide bonds link Cys-46/Cys-185, Cys-80/Cys-125, Cys-113/Cys-130, Cys-226/Cys-333, and Cys-292/Cys-314. His-106 and His-107 together coordinate Cu(2+). Cu(2+) is bound by residues His-171, His-241, His-243, and Met-313. The peptidyl-alpha-hydroxyglycine alpha-amidating lyase stretch occupies residues 498–823 (DFHVEEALEW…SRLEVEHRSV (326 aa)). 4 NHL repeats span residues 501–544 (VEEA…NSFD), 570–611 (AEIL…LEPR), 620–665 (LGRS…FSPS), and 673–717 (GEES…FKTD). A Ca(2+)-binding site is contributed by Val-520. Arg-533 is an a protein binding site. His-585 contacts Zn(2+). Leu-587 is a Ca(2+) binding site. The cysteines at positions 634 and 655 are disulfide-linked. An a protein-binding site is contributed by Tyr-654. His-690 contributes to the Zn(2+) binding site. Cys-702 and Cys-713 are oxidised to a cystine. Arg-706 contacts a protein. Asn-765 carries N-linked (GlcNAc...) asparagine glycosylation. The NHL 5 repeat unit spans residues 769 to 812 (GEIIDVFKPVRKHFDMPHDIVASEDGTVYIGDAHTNTVWKFTLT). Residue His-786 participates in Zn(2+) binding. Asp-787 serves as a coordination point for Ca(2+). A helical membrane pass occupies residues 870 to 893 (VPVVLITTLLVIPVVVLLAIAMFI). At 894–979 (RWKKSRAFGD…APLPTPAPSS (86 aa)) the chain is on the cytoplasmic side. Ser-924, Ser-925, Ser-935, and Ser-948 each carry phosphoserine. The segment at 931–948 (NFFASRKGYSRKGFDRVS) is interaction with RASSF9. The segment at 943–979 (GFDRVSTEGSDQEKDEDDGSESEEEYSAPLPTPAPSS) is disordered. Position 949 is a phosphothreonine (Thr-949). Phosphoserine; by UHMK1 is present on Ser-952. Acidic residues predominate over residues 955–968 (EKDEDDGSESEEEY). At Ser-964 the chain carries Phosphoserine.

It in the C-terminal section; belongs to the peptidyl-alpha-hydroxyglycine alpha-amidating lyase family. The protein in the N-terminal section; belongs to the copper type II ascorbate-dependent monooxygenase family. Monomer. Interacts with RASSF9. It depends on Zn(2+) as a cofactor. The cofactor is Cu(2+).

The protein localises to the cytoplasmic vesicle. The protein resides in the secretory vesicle membrane. It catalyses the reaction a [peptide]-C-terminal glycine + 2 L-ascorbate + O2 = a [peptide]-C-terminal (2S)-2-hydroxyglycine + 2 monodehydro-L-ascorbate radical + H2O. It carries out the reaction a [peptide]-C-terminal (2S)-2-hydroxyglycine = a [peptide]-C-terminal amide + glyoxylate. The catalysed reaction is N-dodecanoylglycine + 2 L-ascorbate + O2 = N-dodecanoyl-(2S)-hydroxyglycine + 2 monodehydro-L-ascorbate radical + H2O. The enzyme catalyses N-dodecanoyl-(2S)-hydroxyglycine = dodecanamide + glyoxylate. It catalyses the reaction N-(9Z,12Z,15Z)-octadecatrienoylglycine + 2 L-ascorbate + O2 = N-(9Z,12Z,15Z)-octadecatrienoyl-(2S)-hydroxyglycine + 2 monodehydro-L-ascorbate radical + H2O. It carries out the reaction N-(9Z,12Z,15Z)-octadecatrienoyl-(2S)-hydroxyglycine = (9Z,12Z,15Z)-octadecatrienamide + glyoxylate. The catalysed reaction is N-(9Z-octadecenoyl)glycine + 2 L-ascorbate + O2 = N-(9Z-octadecenoyl)-(2S)-hydroxyglycine + 2 monodehydro-L-ascorbate radical + H2O. The enzyme catalyses N-(9Z-octadecenoyl)-(2S)-hydroxyglycine = (9Z)-octadecenamide + glyoxylate. It catalyses the reaction N-tetradecanoylglycine + 2 L-ascorbate + O2 = N-tetradecanoyl-(2S)-hydroxyglycine + 2 monodehydro-L-ascorbate radical + H2O. It carries out the reaction N-tetradecanoyl-(2S)-hydroxyglycine = tetradecamide + glyoxylate. The catalysed reaction is N-decanoylglycine + 2 L-ascorbate + O2 = N-decanoyl-(2S)-hydroxyglycine + 2 monodehydro-L-ascorbate radical + H2O. The enzyme catalyses N-decanoyl-(2S)-hydroxyglycine = decanamide + glyoxylate. It catalyses the reaction N-octanoylglycine + 2 L-ascorbate + O2 = N-octanoyl-(2S)-hydroxyglycine + 2 monodehydro-L-ascorbate radical + H2O. It carries out the reaction N-octanoyl-(2S)-hydroxyglycine = octanamide + glyoxylate. PAM activity is inhibited by EDTA, phenylglyoxal and diethyl pyrocarbonate. PAL activity is stimulated by cadmium and inhibited by mercury. Functionally, bifunctional enzyme that catalyzes amidation of the C-terminus of proteins. Alpha-amidation is present at the C-terminus of many endocrine hormones and neuropeptides and is required for their activity. C-terminal amidation also takes place in response to protein fragmentation triggered by oxidative stress, promoting degradation of amidated protein fragments by the proteasome. Alpha-amidation involves two sequential reactions, both of which are catalyzed by separate catalytic domains of the enzyme. The first step, catalyzed by peptidyl alpha-hydroxylating monooxygenase (PHM) domain, is the copper-, ascorbate-, and O2- dependent stereospecific hydroxylation (with S stereochemistry) at the alpha-carbon (C-alpha) of the C-terminal glycine of the peptidylglycine substrate. The second step, catalyzed by the peptidylglycine amidoglycolate lyase (PAL) domain, is the zinc-dependent cleavage of the N-C-alpha bond, producing the alpha-amidated peptide and glyoxylate. Similarly, catalyzes the two-step conversion of an N-fatty acylglycine to a primary fatty acid amide and glyoxylate. This Mus musculus (Mouse) protein is Peptidyl-glycine alpha-amidating monooxygenase.